Reading from the N-terminus, the 473-residue chain is Serine/threonine-protein phosphatase 2A activator 1 (473 aa).

The segment at 360 to 473 (NAVPPPTSAH…HVPTKAPWAK (114 aa)) is disordered. The segment covering 368-378 (AHMSTTQSQSR) has biased composition (polar residues). The span at 395 to 416 (APWATATQAAPPAGAGTAAPWA) shows a compositional bias: low complexity.

This sequence belongs to the PTPA-type PPIase family.

It localises to the cytoplasm. Its subcellular location is the nucleus. It carries out the reaction [protein]-peptidylproline (omega=180) = [protein]-peptidylproline (omega=0). Its function is as follows. PPIases accelerate the folding of proteins. It catalyzes the cis-trans isomerization of proline imidic peptide bonds in oligopeptides. Acts as a regulatory subunit for PP2A-like phosphatases modulating their activity or substrate specificity, probably by inducing a conformational change in the catalytic subunit, a direct target of the PPIase. Can reactivate inactive phosphatase PP2A-phosphatase methylesterase complexes (PP2Ai) in presence of ATP and Mg(2+) by dissociating the inactive form from the complex. In Aspergillus fumigatus (strain ATCC MYA-4609 / CBS 101355 / FGSC A1100 / Af293) (Neosartorya fumigata), this protein is Serine/threonine-protein phosphatase 2A activator 1 (rrd1).